We begin with the raw amino-acid sequence, 55 residues long: Myrmicitoxin(1)-Pr6b (55 aa).

The first 22 residues, 1 to 22 (MKIIYAFLLIAVVAFMGSGIMA), serve as a signal peptide directing secretion. Residues 23 to 29 (ESLAEAI) constitute a propeptide that is removed on maturation.

The protein belongs to the formicidae venom clade 4 family. In terms of tissue distribution, expressed by the venom gland.

The protein localises to the secreted. In terms of biological role, probable neurotoxin. This chain is Myrmicitoxin(1)-Pr6b, found in Pogonomyrmex rugosus (Desert harvester ant).